Consider the following 192-residue polypeptide: UPF0149 protein VP2588 (192 aa).

The protein belongs to the UPF0149 family.

This chain is UPF0149 protein VP2588, found in Vibrio parahaemolyticus serotype O3:K6 (strain RIMD 2210633).